The primary structure comprises 145 residues: Brain and acute leukemia cytoplasmic protein (145 aa).

Gly2 carries the N-myristoyl glycine lipid modification. The S-palmitoyl cysteine moiety is linked to residue Cys3. Residues 3 to 35 form an interaction with CAMK2A region; the sequence is CGGSRADAIEPRYYESWTRETESTWLTYTDSDA. 2 disordered regions span residues 36-56 and 87-109; these read LPSAAATDSGPEAGGLHAGVL and CPNSQNLSSGPLTQKQNGLWATE. Residues 87–105 show a composition bias toward polar residues; that stretch reads CPNSQNLSSGPLTQKQNGL.

Interacts with CAMK2A. Palmitoylation and myristoylation target the protein to the lipid rafts. At the mRNA level, predominantly expressed in the brain. At the protein level, mainly expressed in muscle tissues. In skeletal muscles, expressed in cranial and facial muscles, muscles of the neck, back, thoracic wall, and thigh. Also found in the contractile myoepithelial cell layer of salivary glands. In smooth muscles, expressed in the gastric wall, uterus, urinary bladder, as well as in the muscular lining around seminiferous tubules, prostatic ducts, epididymis, vas deferens, walls of small blood vessels in the dermis, and fascial layers between muscle fibers, brain, and around the spinal cord. Strongly expressed in myocardium. High expression levels are observed in placental spongiotrophoblast and adjacent myometrium. Also expressed in bone marrow hematopoietic cells. In the mature thymus, expressed in rare scattered cells. Weakly expressed in the brain neuropil, particularly near the hippocampus, and spinal cord white matter. Not detected in skin keratinocytes or lung (at protein level).

It is found in the cytoplasm. The protein localises to the synapse. The protein resides in the synaptosome. Its subcellular location is the membrane raft. It localises to the postsynaptic density. May play a synaptic role at the postsynaptic lipid rafts possibly through interaction with CAMK2A. This is Brain and acute leukemia cytoplasmic protein (Baalc) from Mus musculus (Mouse).